Here is a 158-residue protein sequence, read N- to C-terminus: Transcription elongation factor GreA (158 aa).

Positions 47–74 (AEYHAAKEEQSHNEGRINELEDKLARAD) form a coiled coil.

This sequence belongs to the GreA/GreB family.

In terms of biological role, necessary for efficient RNA polymerase transcription elongation past template-encoded arresting sites. The arresting sites in DNA have the property of trapping a certain fraction of elongating RNA polymerases that pass through, resulting in locked ternary complexes. Cleavage of the nascent transcript by cleavage factors such as GreA or GreB allows the resumption of elongation from the new 3'terminus. GreA releases sequences of 2 to 3 nucleotides. The polypeptide is Transcription elongation factor GreA (Rhodopseudomonas palustris (strain ATCC BAA-98 / CGA009)).